Reading from the N-terminus, the 247-residue chain is Adenosylcobinamide-GDP ribazoletransferase (247 aa).

The next 5 helical transmembrane spans lie at 34-54 (IVMF…IFIL), 59-79 (CGIP…TGGF), 113-133 (GGLA…ELAL), 138-158 (MLAA…LLMY), and 187-207 (LAVI…AMVV).

Belongs to the CobS family. It depends on Mg(2+) as a cofactor.

It localises to the cell inner membrane. The enzyme catalyses alpha-ribazole + adenosylcob(III)inamide-GDP = adenosylcob(III)alamin + GMP + H(+). It catalyses the reaction alpha-ribazole 5'-phosphate + adenosylcob(III)inamide-GDP = adenosylcob(III)alamin 5'-phosphate + GMP + H(+). The protein operates within cofactor biosynthesis; adenosylcobalamin biosynthesis; adenosylcobalamin from cob(II)yrinate a,c-diamide: step 7/7. Its function is as follows. Joins adenosylcobinamide-GDP and alpha-ribazole to generate adenosylcobalamin (Ado-cobalamin). Also synthesizes adenosylcobalamin 5'-phosphate from adenosylcobinamide-GDP and alpha-ribazole 5'-phosphate. The polypeptide is Adenosylcobinamide-GDP ribazoletransferase (Salmonella choleraesuis (strain SC-B67)).